The primary structure comprises 447 residues: Probable glycine dehydrogenase (decarboxylating) subunit 1 (447 aa).

It belongs to the GcvP family. N-terminal subunit subfamily. The glycine cleavage system is composed of four proteins: P, T, L and H. In this organism, the P 'protein' is a heterodimer of two subunits.

It catalyses the reaction N(6)-[(R)-lipoyl]-L-lysyl-[glycine-cleavage complex H protein] + glycine + H(+) = N(6)-[(R)-S(8)-aminomethyldihydrolipoyl]-L-lysyl-[glycine-cleavage complex H protein] + CO2. Its function is as follows. The glycine cleavage system catalyzes the degradation of glycine. The P protein binds the alpha-amino group of glycine through its pyridoxal phosphate cofactor; CO(2) is released and the remaining methylamine moiety is then transferred to the lipoamide cofactor of the H protein. The chain is Probable glycine dehydrogenase (decarboxylating) subunit 1 from Bacillus cereus (strain G9842).